Consider the following 54-residue polypeptide: Large ribosomal subunit protein bL32c (54 aa).

Over residues 1 to 20 (MAVPKKRVSKSKRDMRKTTW) the composition is skewed to basic residues. A disordered region spans residues 1–54 (MAVPKKRVSKSKRDMRKTTWKNKASKEAKKALSLAKSVSTGKSKSKGFQIKSSN). The span at 31-42 (ALSLAKSVSTGK) shows a compositional bias: low complexity.

This sequence belongs to the bacterial ribosomal protein bL32 family.

It localises to the plastid. Its subcellular location is the chloroplast. This Chlorokybus atmophyticus (Soil alga) protein is Large ribosomal subunit protein bL32c.